Here is a 694-residue protein sequence, read N- to C-terminus: Frizzled-8 (694 aa).

The signal sequence occupies residues M1–A27. The Extracellular portion of the chain corresponds to A28–A275. Residues A30–Y151 enclose the FZ domain. Intrachain disulfides connect C35-C96, C43-C89, C80-C118, C107-C148, and C111-C135. An N-linked (GlcNAc...) asparagine glycan is attached at N49. Q71–I78 contacts hexadecanoate. A wnt-binding region spans residues I95 to Y100. Residues L147–N152 form a wnt-binding region. A glycan (N-linked (GlcNAc...) asparagine) is linked at N152. The interval D155–A226 is disordered. Pro residues predominate over residues P161–Q175. Residues P176–P186 show a composition bias toward low complexity. The span at R210–A225 shows a compositional bias: gly residues. A helical transmembrane segment spans residues F276–V296. Residues S297–P312 are Cytoplasmic-facing. A helical transmembrane segment spans residues I313 to A333. Residues G334–C396 lie on the Extracellular side of the membrane. Residues T397–L417 form a helical membrane-spanning segment. Topologically, residues S418–Q439 are cytoplasmic. Residues Y440–S460 form a helical membrane-spanning segment. Residues S461 to G483 lie on the Extracellular side of the membrane. N475 is a glycosylation site (N-linked (GlcNAc...) asparagine). A helical membrane pass occupies residues F484 to F504. Residues V505–R532 are Cytoplasmic-facing. A helical transmembrane segment spans residues L533–Y553. Residues E554–A584 lie on the Extracellular side of the membrane. Residues V585–W605 form a helical membrane-spanning segment. The Cytoplasmic segment spans residues S606–V694. A Lys-Thr-X-X-X-Trp motif, mediates interaction with the PDZ domain of Dvl family members motif is present at residues K608–W613. The segment covering G648–S664 has biased composition (gly residues). The segment at G648–D668 is disordered. A PDZ-binding motif is present at residues S692–V694.

This sequence belongs to the G-protein coupled receptor Fz/Smo family. In terms of assembly, component of a Wnt-signaling complex that contains a WNT protein, a FZD protein and LRP5 or LRP6. Interacts directly with LRP5 or LRP6; the interaction is promoted by Wnt-binding and signaling and inhibited by DKK1. Interacts with GPOC, RSPO1 and RSPO3. Interacts with glypican GPC3. Ubiquitinated by ZNRF3, leading to its degradation by the proteasome. As to expression, most abundant in fetal kidney, followed by brain and lung. In adult tissues, expressed in kidney, heart, pancreas and skeletal muscle.

The protein localises to the membrane. The protein resides in the golgi apparatus. It is found in the cell membrane. Its function is as follows. Receptor for Wnt proteins. Component of the Wnt-Fzd-LRP5-LRP6 complex that triggers beta-catenin signaling through inducing aggregation of receptor-ligand complexes into ribosome-sized signalosomes. The beta-catenin canonical signaling pathway leads to the activation of disheveled proteins, inhibition of GSK-3 kinase, nuclear accumulation of beta-catenin and activation of Wnt target genes. A second signaling pathway involving PKC and calcium fluxes has been seen for some family members, but it is not yet clear if it represents a distinct pathway or if it can be integrated in the canonical pathway, as PKC seems to be required for Wnt-mediated inactivation of GSK-3 kinase. Both pathways seem to involve interactions with G-proteins. May be involved in transduction and intercellular transmission of polarity information during tissue morphogenesis and/or in differentiated tissues. Coreceptor along with RYK of Wnt proteins, such as WNT1. This is Frizzled-8 (FZD8) from Homo sapiens (Human).